Here is a 458-residue protein sequence, read N- to C-terminus: BPI fold-containing family B member 2 (458 aa).

The signal sequence occupies residues 1–20 (MAWASRLGLLLALLLPVVGA). Thr-52 is modified (phosphothreonine; by FAM20C). A Phosphoserine; by FAM20C modification is found at Ser-60. Asn-96, Asn-151, Asn-293, and Asn-332 each carry an N-linked (GlcNAc...) asparagine glycan. Cysteines 137 and 174 form a disulfide.

This sequence belongs to the BPI/LBP/Plunc superfamily. BPI/LBP family. In terms of tissue distribution, highly expressed in tonsils, especially in hypertrophic tonsils. Detected at very low levels in fetal liver.

The protein resides in the secreted. This is BPI fold-containing family B member 2 (BPIFB2) from Homo sapiens (Human).